The chain runs to 409 residues: Potassium channel subfamily K member 3 (409 aa).

Residues 1 to 8 (MKRQNVRT) lie on the Cytoplasmic side of the membrane. A helical transmembrane segment spans residues 9 to 29 (LALIVCTFTYLLVGAAVFDAL). The N-linked (GlcNAc...) asparagine glycan is linked to asparagine 53. An intramembrane region (pore-forming) is located at residues 78 to 101 (WRFAGSFYFAITVITTIGYGHAAP). The chain crosses the membrane as a helical span at residues 108–128 (VFCMFYALLGIPLTLVMFQSL). The Cytoplasmic portion of the chain corresponds to 129–158 (GERINTFVRYLLHRAKRGLGMRHAEVSMAN). A helical membrane pass occupies residues 159 to 179 (MVLIGFVSCISTLCIGAAAFS). Residues 184-207 (WTFFQAYYYCFITLTTIGFGDYVA) constitute an intramembrane region (pore-forming). The helical transmembrane segment at 223 to 243 (FSFVYILTGLTVIGAFLNLVV) threads the bilayer. At 244–409 (LRFMTMNAED…RGLMKRRSSV (166 aa)) the chain is on the cytoplasmic side.

It belongs to the two pore domain potassium channel (TC 1.A.1.8) family. In terms of assembly, homodimer. Heterodimer with KCNK1. Heterodimer with KCNK9. As to expression, very strong expression in heart, also detected in kidney, brain, skin, testis, lung, skeletal muscle, small intestine and stomach. Not detected in liver, thymus or spleen. Expressed in adrenal glands mainly in zona glomerulosa and zona fasciculata of the cortex. Expressed at higher levels in brown and beige than in white adipocytes.

It is found in the cell membrane. It carries out the reaction K(+)(in) = K(+)(out). The catalysed reaction is Na(+)(in) = Na(+)(out). Its activity is regulated as follows. Activated by halothane and isoflurane. Inhibited by external acidification, diacylglycerol and anandamide. Inactivated by barium. Its function is as follows. K(+) channel that conducts voltage-dependent outward rectifying currents upon membrane depolarization. Voltage sensing is coupled to K(+) electrochemical gradient in an 'ion flux gating' mode where outward but not inward ion flow opens the gate. Changes ion selectivity and becomes permeable to Na(+) ions in response to extracellular acidification. Protonation of the pH sensor His-98 stabilizes C-type inactivation conformation likely converting the channel from outward K(+)-conducting, to inward Na(+)-conducting to nonconductive state. Homo- and heterodimerizes to form functional channels with distinct regulatory and gating properties. Allows K(+) currents with fast-gating kinetics important for the repolarization and hyperpolarization phases of action potentials. In cerebellar granule cells, heteromeric KCNK3:KCNK9 channel may hyperpolarize the resting membrane potential to limit intrinsic neuronal excitability, but once the action potential threshold is reached, it may support high-frequency action potential firing and increased neuronal excitability. Dispensable for central chemosensory respiration i.e. breathing controlled by brainstem CO2/pH, it rather conducts pH-sensitive currents and controls the firing rate of serotonergic raphe neurons involved in potentiation of the respiratory chemoreflex. Additionally, imparts chemosensitivity to type 1 cells in carotid bodies which respond to a decrease in arterial oxygen pressure or an increase in carbon dioxide pressure or pH to initiate adaptive changes in pulmonary ventilation. In adrenal gland, contributes to the maintenance of a hyperpolarized resting membrane potential of aldosterone-producing cells at zona glomerulosa and limits aldosterone release as part of a regulatory mechanism that controls arterial blood pressure and electrolyte homeostasis. In brown adipocytes, mediates K(+) efflux that counteracts norepinephrine-induced membrane depolarization, limits Ca(2+) efflux and downstream cAMP and PKA signaling, ultimately attenuating lipid oxidation and adaptive thermogenesis. The polypeptide is Potassium channel subfamily K member 3 (Mus musculus (Mouse)).